The following is an 85-amino-acid chain: Conotoxin Mi15a (85 aa).

A signal peptide spans Met1–Ser23. Residues Asp24 to Arg49 constitute a propeptide that is removed on maturation. A Pyrrolidone carboxylic acid modification is found at Gln50.

This sequence belongs to the conotoxin O2 superfamily. In terms of processing, contains 4 disulfide bonds. As to expression, expressed by the venom duct.

The protein localises to the secreted. The polypeptide is Conotoxin Mi15a (Conus miles (Soldier cone)).